The chain runs to 443 residues: Ribosomal protein uS12 methylthiotransferase RimO (443 aa).

Residues 5–115 enclose the MTTase N-terminal domain; sequence PNIGFISLGC…VMKHVHKYVP (111 aa). [4Fe-4S] cluster contacts are provided by cysteine 14, cysteine 50, cysteine 79, cysteine 147, cysteine 151, and cysteine 154. One can recognise a Radical SAM core domain in the interval 133-374; the sequence is LTPKHYAYLK…MQVQQRISAA (242 aa). Residues 377 to 443 form the TRAM domain; that stretch reads QQKVGKTLAV…ADEYDLWGTC (67 aa).

This sequence belongs to the methylthiotransferase family. RimO subfamily. Requires [4Fe-4S] cluster as cofactor.

It is found in the cytoplasm. The catalysed reaction is L-aspartate(89)-[ribosomal protein uS12]-hydrogen + (sulfur carrier)-SH + AH2 + 2 S-adenosyl-L-methionine = 3-methylsulfanyl-L-aspartate(89)-[ribosomal protein uS12]-hydrogen + (sulfur carrier)-H + 5'-deoxyadenosine + L-methionine + A + S-adenosyl-L-homocysteine + 2 H(+). In terms of biological role, catalyzes the methylthiolation of an aspartic acid residue of ribosomal protein uS12. The polypeptide is Ribosomal protein uS12 methylthiotransferase RimO (Actinobacillus pleuropneumoniae serotype 7 (strain AP76)).